Here is a 272-residue protein sequence, read N- to C-terminus: Phosphate import ATP-binding protein PstB (272 aa).

In terms of domain architecture, ABC transporter spans 18–257; sequence VSIQNATISY…FNDTDKIFNA (240 aa). 50-57 is a binding site for ATP; sequence GPSGCGKS.

It belongs to the ABC transporter superfamily. Phosphate importer (TC 3.A.1.7) family. In terms of assembly, the complex is composed of two ATP-binding proteins (PstB), two transmembrane proteins (PstC and PstA) and a solute-binding protein (PstS).

The protein resides in the cell inner membrane. The enzyme catalyses phosphate(out) + ATP + H2O = ADP + 2 phosphate(in) + H(+). Functionally, part of the ABC transporter complex PstSACB involved in phosphate import. Responsible for energy coupling to the transport system. The chain is Phosphate import ATP-binding protein PstB from Synechococcus sp. (strain CC9311).